A 404-amino-acid polypeptide reads, in one-letter code: Phosphopentomutase (404 aa).

Residues D10, D303, H308, D344, H345, and H356 each coordinate Mn(2+).

The protein belongs to the phosphopentomutase family. Mn(2+) serves as cofactor.

Its subcellular location is the cytoplasm. The catalysed reaction is 2-deoxy-alpha-D-ribose 1-phosphate = 2-deoxy-D-ribose 5-phosphate. It catalyses the reaction alpha-D-ribose 1-phosphate = D-ribose 5-phosphate. The protein operates within carbohydrate degradation; 2-deoxy-D-ribose 1-phosphate degradation; D-glyceraldehyde 3-phosphate and acetaldehyde from 2-deoxy-alpha-D-ribose 1-phosphate: step 1/2. Isomerase that catalyzes the conversion of deoxy-ribose 1-phosphate (dRib-1-P) and ribose 1-phosphate (Rib-1-P) to deoxy-ribose 5-phosphate (dRib-5-P) and ribose 5-phosphate (Rib-5-P), respectively. This is Phosphopentomutase from Shewanella putrefaciens (strain CN-32 / ATCC BAA-453).